Consider the following 142-residue polypeptide: Transcription antitermination protein NusB (142 aa).

The protein belongs to the NusB family.

Involved in transcription antitermination. Required for transcription of ribosomal RNA (rRNA) genes. Binds specifically to the boxA antiterminator sequence of the ribosomal RNA (rrn) operons. This is Transcription antitermination protein NusB from Thermotoga sp. (strain RQ2).